Reading from the N-terminus, the 476-residue chain is NAD(+) hydrolase ThsA (476 aa).

The 280-residue stretch at 4–283 folds into the Deacetylase sirtuin-type domain; that stretch reads NPIVELFIKD…QRIENNIKTK (280 aa). NAD(+) contacts are provided by Ala23, Asp114, and His152. The active-site Proton acceptor is His152. Positions 284–476 are SLOG (STALD) domain, binds 3'cADPR; it reads TVFLSGSAVE…IIEFVEILSN (193 aa). Residues Gly289, Ser290, Leu326, Phe357, Arg371, Lys388, Gly399, and Glu403 each coordinate 3'cADPR.

Belongs to the soluble Thoeris ThsA family. In terms of assembly, homotetramer formed by dimer of dimers; homooctamers are occasionally seen. Not seen to interact with ThsB. In the absence of the signal generated by ThsB, 63% monomer and 20% homotetramer; in the presence of the ThsB signal product 40% of the protein is dimeric. Homotetramer in solution; probably dimerizes via the N-terminal sirtuin-like domain.

The protein localises to the cytoplasm. The catalysed reaction is NAD(+) + H2O = ADP-D-ribose + nicotinamide + H(+). Its activity is regulated as follows. Activated by a molecule generated by endogenous ThsB (AC J8G8J6) or ThsB' (AC J8CSK2); activation in vitro is 50-100x more sensitive to 3' cyclic ADP-D-ribose (3'cADPR) than 2'cADPR. 3'cADPR activates the NADase function of ThsA by binding to the SLOG domain, which changes its tetramer organization, allowing NAD to access the active site. Also activated by a signal molecule generated by B.dafuensis TIR1 (AC A0A5B8Z670) and TIR2 (AC A0A5B8Z260), and by BdTIR (AC I1GTC2), a plant protein involved in defense against bacterial infection. The signal produced by BdTIR is probably 2'cADPR, which activates this protein, the signal produced by endogenous ThsB' is probably 3'cADPR. Functionally, NAD(+) hydrolyzing component (NADase) of the Thoeris antiviral defense system, composed of ThsA and ThsB. Activated by a signal molecule generated by endogenous ThsB (AC J8G8J6) or ThsB' (AC J8CSK2, probably 3'cADPR), by TIR1 and TIR2 from B.dafuensis or by BdTIR from B.distachyon (AC I1GTC2, probably 2'cADPR). Upon activation binds and hydrolyzes NAD(+), leading to cell death and inhibition of phage replication. Not seen to bind DNA. Activation is 50-100x more sensitive to 3' cyclic ADP-D-ribose (3'cADPR) than 2'cADPR. In another paper ThsA is not activated by any tested cADPR isomer, although it binds 3'cADPR; it was suggested the protein is already in a fully active state. Expression of ThsA and ThsB in B.subtilis (strain BEST7003) confers resistance to phages phi29, SBSphiC, SBSphiJ and SPO1. At multiplicity of infection (MOI) of 0.05 Thoeris-encoding cultures grow normally when infected with SPO1, at MOI 5 cultures collapse prematurely by 90 minutes post-infection, thus the phage are not able to complete a replication cycle. NAD(+) levels fall and ADP-D-ribose levels rise 60 minutes post-infection. Thoeris cultures eventually recover, but retain the same susceptibility to SPO1. In Bacillus cereus (strain MSX-D12), this protein is NAD(+) hydrolase ThsA.